The sequence spans 1832 residues: Multifunctional protein pyr-3 (1832 aa).

The interval 2-400 is GATase (Glutamine amidotransferase); sequence AATVYRPATA…PGPRDTEFLF (399 aa). Ser-64, Gly-273, and Gly-275 together coordinate L-glutamine. Positions 228 to 413 constitute a Glutamine amidotransferase type-1 domain; sequence RILCLDVGMK…IQTVAKCTTD (186 aa). The Nucleophile; for GATase activity role is filled by Cys-302. Residues Leu-303, Gln-306, Asn-344, Gly-346, and Tyr-347 each contribute to the L-glutamine site. Residues His-386 and Glu-388 each act as for GATase activity in the active site. The segment at 401 to 442 is linker; it reads DVFIQTVAKCTTDNTLLQKGVEFPGGTTEENERLHPRVDVKK. The interval 443–983 is CPSase A; the sequence is VLVLGSGGLS…SEHDVSFEDR (541 aa). The CPSase (Carbamoyl phosphate synthase) stretch occupies residues 443–1484; it reads VLVLGSGGLS…TNVKNAKILV (1042 aa). Arg-560, Arg-600, Gly-606, Gly-607, Arg-637, Met-639, Glu-644, Gly-670, Ile-671, His-672, Gln-713, and Glu-727 together coordinate ATP. ATP-grasp domains are found at residues 564-756 and 1102-1293; these read ARSM…KLGL and SRML…KAIM. Gln-713, Glu-727, and Asn-729 together coordinate Mg(2+). Gln-713, Glu-727, and Asn-729 together coordinate Mn(2+). Positions 984-1484 are CPSase B; sequence GVMVLGSGVY…TNVKNAKILV (501 aa). ATP is bound by residues Arg-1138, Lys-1177, Ile-1179, Glu-1184, Gly-1209, Val-1210, His-1211, Ser-1212, Gln-1252, and Glu-1264. Mg(2+) contacts are provided by Gln-1252, Glu-1264, and Asn-1266. The Mn(2+) site is built by Gln-1252, Glu-1264, and Asn-1266. In terms of domain architecture, MGS-like spans 1359–1507; it reads FKVPKKNILL…RDYQTSHTPL (149 aa). The tract at residues 1485-1528 is linker; that stretch reads EAIARYRDMEIGERDYQTSHTPLQLSGQVNFTLQDSLSRPHSFK. Residues 1529-1832 are ATCase (Aspartate transcarbamylase); that stretch reads KAHVLSVEQY…MALLALVMSG (304 aa). Carbamoyl phosphate contacts are provided by Arg-1581 and Thr-1582. Lys-1609 lines the L-aspartate pocket. Residues Arg-1630, His-1658, and Gln-1661 each coordinate carbamoyl phosphate. L-aspartate contacts are provided by Arg-1691 and Arg-1754. Residues Leu-1793 and Pro-1794 each coordinate carbamoyl phosphate.

This sequence in the N-terminal section; belongs to the CarA family. The protein in the central section; belongs to the CarB family. It in the C-terminal section; belongs to the aspartate/ornithine carbamoyltransferase superfamily. ATCase family. Mg(2+) is required as a cofactor. Mn(2+) serves as cofactor.

Its subcellular location is the cytoplasm. It is found in the nucleus. It catalyses the reaction hydrogencarbonate + L-glutamine + 2 ATP + H2O = carbamoyl phosphate + L-glutamate + 2 ADP + phosphate + 2 H(+). It carries out the reaction L-glutamine + H2O = L-glutamate + NH4(+). The enzyme catalyses hydrogencarbonate + NH4(+) + 2 ATP = carbamoyl phosphate + 2 ADP + phosphate + 2 H(+). The catalysed reaction is carbamoyl phosphate + L-aspartate = N-carbamoyl-L-aspartate + phosphate + H(+). It participates in pyrimidine metabolism; UMP biosynthesis via de novo pathway; (S)-dihydroorotate from bicarbonate: step 1/3. It functions in the pathway pyrimidine metabolism; UMP biosynthesis via de novo pathway; (S)-dihydroorotate from bicarbonate: step 2/3. Its activity is regulated as follows. Both CPSase and ATCase activities are feedback inhibited by the end product UTP. Multifunctional protein that encodes the first 2 enzymatic activities of the de novo pyrimidine pathway: carbamoylphosphate synthetase (CPSase; EC 6.3.5.5) and aspartate transcarbamylase (ATCase; EC 2.1.3.2). The CPSase-function is accomplished in 2 steps, by a glutamine-dependent amidotransferase activity (GATase) that binds and cleaves glutamine to produce ammonia, followed by an ammonium-dependent carbamoyl phosphate synthetase, which reacts with the ammonia, hydrogencarbonate and ATP to form carbamoyl phosphate. The endogenously produced carbamoyl phosphate is sequestered and channeled to the ATCase active site. ATCase then catalyzes the formation of carbamoyl-L-aspartate from L-aspartate and carbamoyl phosphate. The chain is Multifunctional protein pyr-3 (pyr-3) from Neurospora crassa (strain ATCC 24698 / 74-OR23-1A / CBS 708.71 / DSM 1257 / FGSC 987).